A 249-amino-acid polypeptide reads, in one-letter code: MAHSPSRVFAALSPSAGDVYRDENQSVFNRGRKQTHLSAQSNVRVIEVTGCAEISSPPDRACVSISVKNSKENVNDVTNSVTRRLEYILQTARQHDVKEENITVTKHLQRDEDLFHMQAEVLVVFLDFEKMQQARTVLIEKLDKSVCVGDPYYSHSAESLSLLRRRVCLEAVDNARLKASEACCTLGQALGRPLLVREEESREWSSSQQDASGSPLTLHPRTDATLISATSRMFVTFELRPKDNNRRKF.

This sequence belongs to the IRAK1BP1 family.

Its subcellular location is the cytoplasm. It localises to the nucleus. In terms of biological role, may be part of a signaling pathway that leads to NF-kappa-B activation. This Danio rerio (Zebrafish) protein is Interleukin-1 receptor-associated kinase 1-binding protein 1 homolog (irak1bp1).